The chain runs to 302 residues: Methionyl-tRNA formyltransferase (302 aa).

Residue 107–110 (SLLP) participates in (6S)-5,6,7,8-tetrahydrofolate binding.

Belongs to the Fmt family.

The enzyme catalyses L-methionyl-tRNA(fMet) + (6R)-10-formyltetrahydrofolate = N-formyl-L-methionyl-tRNA(fMet) + (6S)-5,6,7,8-tetrahydrofolate + H(+). Functionally, attaches a formyl group to the free amino group of methionyl-tRNA(fMet). The formyl group appears to play a dual role in the initiator identity of N-formylmethionyl-tRNA by promoting its recognition by IF2 and preventing the misappropriation of this tRNA by the elongation apparatus. The chain is Methionyl-tRNA formyltransferase from Leifsonia xyli subsp. xyli (strain CTCB07).